The primary structure comprises 250 residues: CCN family member 5 (250 aa).

Positions 1-23 are cleaved as a signal peptide; sequence MRGSPLIRLLATSFLCLLSMVCA. Intrachain disulfides connect C22–C50, C26–C52, C32–C53, C39–C56, C64–C78, and C70–C100. The IGFBP N-terminal domain maps to 24-103; that stretch reads QLCRTPCTCP…DEDDGDCEVN (80 aa). Positions 98 to 164 constitute a VWFC domain; sequence GDCEVNGRRY…GKCCPEWVCD (67 aa). A TSP type-1 domain is found at 194 to 238; it reads WPNWSTAWGPCSTTCGLGIATRVSNQNRFCQLEIQRRLCLPRPCL. An N-linked (GlcNAc...) asparagine glycan is attached at N196.

It belongs to the CCN family.

The protein resides in the secreted. May play an important role in modulating bone turnover. Promotes the adhesion of osteoblast cells and inhibits the binding of fibrinogen to integrin receptors. In addition, inhibits osteocalcin production. This Rattus norvegicus (Rat) protein is CCN family member 5 (Ccn5).